The sequence spans 420 residues: Heterogeneous nuclear ribonucleoprotein D-like (420 aa).

2 disordered regions span residues 1-83 (MEVP…RRRP) and 96-120 (QRSA…SVTM). R25 carries the post-translational modification Omega-N-methylarginine. A compositionally biased stretch (low complexity) spans 36 to 52 (RQLAPLLPSLAPSSARQ). RRM domains are found at residues 148–230 (GKMF…KGKE) and 233–312 (KKVF…QPKE). An N6-methyllysine modification is found at K161. K209 is covalently cross-linked (Glycyl lysine isopeptide (Lys-Gly) (interchain with G-Cter in SUMO2)). K216 bears the N6-acetyllysine mark. Position 241 is a phosphoserine (S241). 2 disordered regions span residues 313 to 348 (VYRQ…NWNQ) and 398 to 420 (GQQS…YQPY). Gly residues predominate over residues 323 to 342 (GGRGAAAGGRGGTRGRGRGQ). The tract at residues 342–420 (QGQNWNQGFN…GNHQNNYQPY (79 aa)) is necessary for interaction with TNPO1. The tract at residues 396–420 (YSGQQSTYGKASRGGGNHQNNYQPY) is necessary for its nuclear import and export. R408 carries the dimethylated arginine; alternate modification. The residue at position 408 (R408) is an Omega-N-methylarginine; alternate.

Interacts with ZNF148. Interacts with TNPO1. In terms of processing, dimethylation of Arg-408 is probably of the asymmetric type. Expressed in heart, brain, placenta, lung, liver, skeletal muscle, kidney, pancreas, spleen, thymus, prostate, testis, ovary, small intestine, colon and leukocytes. Expressed in myeloid leukemia, gastric adenocarcinoma, cervical carcinoma, hepatoma, fibrosarcoma, colon adenocarcinoma, epidermoid carcinoma, osteosarcoma and urinary bladder carcinoma cells.

It localises to the nucleus. The protein resides in the cytoplasm. Its function is as follows. Acts as a transcriptional regulator. Promotes transcription repression. Promotes transcription activation in differentiated myotubes. Binds to double- and single-stranded DNA sequences. Binds to the transcription suppressor CATR sequence of the COX5B promoter. Binds with high affinity to RNA molecules that contain AU-rich elements (AREs) found within the 3'-UTR of many proto-oncogenes and cytokine mRNAs. Binds both to nuclear and cytoplasmic poly(A) mRNAs. Binds to poly(G) and poly(A), but not to poly(U) or poly(C) RNA homopolymers. Binds to the 5'-ACUAGC-3' RNA consensus sequence. This is Heterogeneous nuclear ribonucleoprotein D-like (HNRNPDL) from Homo sapiens (Human).